Reading from the N-terminus, the 100-residue chain is uncharacterized protein (100 aa).

It belongs to the ycf15 family.

It localises to the plastid. The protein resides in the chloroplast. This is an uncharacterized protein from Panax ginseng (Korean ginseng).